Reading from the N-terminus, the 149-residue chain is Myoglobin (149 aa).

A2 bears the N-acetylalanine mark. One can recognise a Globin domain in the interval 2–143; sequence ADWDKVNSVW…ICSDIEKEYK (142 aa). Heme b is bound at residue H89.

Belongs to the globin family. As to quaternary structure, monomeric.

The protein resides in the cytoplasm. The protein localises to the sarcoplasm. The enzyme catalyses Fe(III)-heme b-[protein] + nitric oxide + H2O = Fe(II)-heme b-[protein] + nitrite + 2 H(+). The catalysed reaction is H2O2 + AH2 = A + 2 H2O. Its function is as follows. Monomeric heme protein which primary function is to store oxygen and facilitate its diffusion within muscle tissues. Reversibly binds oxygen through a pentacoordinated heme iron and enables its timely and efficient release as needed during periods of heightened demand. Depending on the oxidative conditions of tissues and cells, and in addition to its ability to bind oxygen, it also has a nitrite reductase activity whereby it regulates the production of bioactive nitric oxide. Under stress conditions, like hypoxia and anoxia, it also protects cells against reactive oxygen species thanks to its pseudoperoxidase activity. The protein is Myoglobin (mb) of Galeorhinus galeus (Tope shark).